Consider the following 433-residue polypeptide: MQRRDDSSARMGRGPGGPGSARQGGPNPRRSPRGGGGRGAGAQHPQPLLTGGAAAGSSGAQGPAAANPAPLLPGGAVKMEPENKYLPELMAEKDSLDPSSTHAMQLLSAEIEKIQKGETTKKDEEENYLDLFSHKNMKLKERVLIPVKQYPKFNFVGKILGPQGNTIKRLQEETGAKISVLGKGSMRDKAKEEELRKGGDPKYAHLNMDLHVFIEVFGPPCEAYALMAHAMEEVKKFLVPDMMDDICQEQFLELSYLNGVPEPTRGRGGPVRGRGAAPPPPPPVPRGRGVGPPPPPPPPRGALVRGAPVRGAIARGAAVARGVPPPPAVRGAPAPRARAAGIQRIPLPPPPAPETYEEYGYDDAYADQSYEGYEGYYSQGQGDTEYYDYGHGEAQETYEAYGQDDWNGTRPSLKAPPARPVKGAYREHPYGRY.

The tract at residues 1–79 (MQRRDDSSAR…PLLPGGAVKM (79 aa)) is disordered. Residues 41–76 (GAQHPQPLLTGGAAAGSSGAQGPAAANPAPLLPGGA) are compositionally biased toward low complexity. The tract at residues 82-243 (ENKYLPELMA…VKKFLVPDMM (162 aa)) is involved in homodimerization. Residues 171–197 (QEETGAKISVLGKGSMRDKAKEEELRK) enclose the KH domain. Disordered regions lie at residues 259 to 305 (GVPE…ALVR), 317 to 351 (AAVA…PPPP), and 403 to 433 (QDDW…YGRY). Residues 277 to 300 (APPPPPPVPRGRGVGPPPPPPPPR) are compositionally biased toward pro residues. A compositionally biased stretch (low complexity) spans 329 to 342 (VRGAPAPRARAAGI). The segment covering 424–433 (AYREHPYGRY) has biased composition (basic and acidic residues).

Belongs to the KHDRBS family. As to quaternary structure, self-associates to form homooligomers when bound to RNA, oligomerization appears to be limited when binding to proteins. In terms of processing, tyrosine phosphorylated by several non-receptor tyrosine kinases including LCK, FYN and JAK3. Post-translationally, acetylated. Positively correlates with ability to bind RNA. Methylated by HRMT1L2. Required for nuclear localization.

It localises to the nucleus. Its subcellular location is the cytoplasm. The protein resides in the membrane. In terms of biological role, recruited and tyrosine phosphorylated by several receptor systems, for example the T-cell, leptin and insulin receptors. Once phosphorylated, functions as an adapter protein in signal transduction cascades by binding to SH2 and SH3 domain-containing proteins. Role in G2-M progression in the cell cycle. Represses CBP-dependent transcriptional activation apparently by competing with other nuclear factors for binding to CBP. Also acts as a putative regulator of mRNA stability and/or translation rates and mediates mRNA nuclear export. Plays a role in the regulation of alternative splicing and influences mRNA splice site selection and exon inclusion. The chain is KH domain-containing, RNA-binding, signal transduction-associated protein 1 from Gallus gallus (Chicken).